The following is a 154-amino-acid chain: Urease accessory protein UreE (154 aa).

It belongs to the UreE family.

It localises to the cytoplasm. Functionally, involved in urease metallocenter assembly. Binds nickel. Probably functions as a nickel donor during metallocenter assembly. In Prochlorococcus marinus subsp. pastoris (strain CCMP1986 / NIES-2087 / MED4), this protein is Urease accessory protein UreE.